The chain runs to 358 residues: 5-amino-6-(D-ribitylamino)uracil--L-tyrosine 4-hydroxyphenyl transferase 2 (358 aa).

Residues valine 45 to arginine 292 enclose the Radical SAM core domain. The [4Fe-4S] cluster site is built by cysteine 59, cysteine 63, and cysteine 66.

The protein belongs to the radical SAM superfamily. CofH family. As to quaternary structure, consists of two subunits, CofG and CofH. The cofactor is [4Fe-4S] cluster.

It carries out the reaction 5-amino-6-(D-ribitylamino)uracil + L-tyrosine + S-adenosyl-L-methionine = 5-amino-5-(4-hydroxybenzyl)-6-(D-ribitylimino)-5,6-dihydrouracil + 2-iminoacetate + 5'-deoxyadenosine + L-methionine + H(+). It functions in the pathway cofactor biosynthesis; coenzyme F0 biosynthesis. Its function is as follows. Catalyzes the radical-mediated synthesis of 5-amino-5-(4-hydroxybenzyl)-6-(D-ribitylimino)-5,6-dihydrouracil from 5-amino-6-(D-ribitylamino)uracil and L-tyrosine. The sequence is that of 5-amino-6-(D-ribitylamino)uracil--L-tyrosine 4-hydroxyphenyl transferase 2 from Methanococcus maripaludis (strain DSM 14266 / JCM 13030 / NBRC 101832 / S2 / LL).